A 533-amino-acid polypeptide reads, in one-letter code: MTQAEIKLCSLLLQEHFGEIVEKIGVHLIRTGSQPLRVIAHDTGTSLDQVKKALCVLIQHNLVTYQVHKRGVVEYEAQCNRVLRMLRYPRYIYTAKTLYSDTGELIVEELLLNGKMTMSAVVKKVADRLTETMEDGKTMDYAEVSNTFVRLVDTHFVQRCPLVPATENSDTGPPPPAPTLVVSEKDMYLVPKLSLIGKGKRRRSSDEDATGEPKAKRPKQTTDNKEPIPDDGIYWQANLDRFHQHFRDQAIVSAVANRMDQTSSEIVRTMLRMSEVTTPSGAPFTQPLSSNEIFRSLPVGYNISKQVLDQYLTLLADDPLEFVGKSGDSGGGMYVINLHKALGSLATATLESVVQERFGSRCARIFRLVLQKKHLEQKQVEDFAMIPAKEAKDMLYKMLSENFISLQEIPKTPDHAPSRTFYLYTVNILSAARMLLHRCYKSVANLIERRQFETKENKRLLEKSQRVEAIIASMQATGAEEAQLQEIEEMITAPERQQLETLKRNVNKLDACEIQVDETIFLLESYIESTMKR.

Ser194 is modified (phosphoserine). Residues 197–230 are disordered; that stretch reads GKGKRRRSSDEDATGEPKAKRPKQTTDNKEPIPD. Basic and acidic residues predominate over residues 211–228; sequence GEPKAKRPKQTTDNKEPI.

This sequence belongs to the eukaryotic RPC3/POLR3C RNA polymerase subunit family. As to quaternary structure, component of the RNA polymerase III complex consisting of 17 subunits: a ten-subunit horseshoe-shaped catalytic core composed of POLR3A/RPC1, POLR3B/RPC2, POLR1C/RPAC1, POLR1D/RPAC2, POLR3K/RPC10, POLR2E/RPABC1, POLR2F/RPABC2, POLR2H/RPABC3, POLR2K/RPABC4 and POLR2L/RPABC5; a mobile stalk composed of two subunits POLR3H/RPC8 and CRCP/RPC9, protruding from the core and functioning primarily in transcription initiation; and additional subunits homologous to general transcription factors of the RNA polymerase II machinery, POLR3C/RPC3-POLR3F/RPC6-POLR3G/RPC7 heterotrimer required for transcription initiation and POLR3D/RPC4-POLR3E/RPC5 heterodimer involved in both transcription initiation and termination. Directly interacts with POLR3G/RPC7 and POLR3GL. Directly interacts with POLR3F/RPC6. Interacts with GTF3C4. As part of the RNA polymerase III complex, interacts with PKP2.

It is found in the nucleus. DNA-dependent RNA polymerase catalyzes the transcription of DNA into RNA using the four ribonucleoside triphosphates as substrates. Specific peripheric component of RNA polymerase III (Pol III) which synthesizes small non-coding RNAs including 5S rRNA, snRNAs, tRNAs and miRNAs from at least 500 distinct genomic loci. Part of POLR3C/RPC3-POLR3F/RPC6-POLR3G/RPC7 heterotrimer, coordinates the dynamics of Pol III stalk and clamp modules during the transition from apo to elongation state. Pol III plays a key role in sensing and limiting infection by intracellular bacteria and DNA viruses. Acts as a nuclear and cytosolic DNA sensor involved in innate immune response. Can sense non-self dsDNA that serves as template for transcription into dsRNA. The non-self RNA polymerase III transcripts, such as Epstein-Barr virus-encoded RNAs (EBERs) induce type I interferon and NF-kappa-B through the RIG-I pathway. Preferentially binds single-stranded DNA (ssDNA) in a sequence-independent manner. The protein is DNA-directed RNA polymerase III subunit RPC3 (POLR3C) of Bos taurus (Bovine).